Here is a 466-residue protein sequence, read N- to C-terminus: Vimentin (466 aa).

A compositionally biased stretch (low complexity) spans 1–13; it reads MSTRSVSSSSYRR. A disordered region spans residues 1-31; it reads MSTRSVSSSSYRRMFGGPGTASRPSSTRSYV. N-acetylserine is present on Ser2. Residues 2–95 form a head region; that stretch reads STRSVSSSSY…FSLADAINTE (94 aa). Ser5 is modified (phosphoserine). Ser7 is subject to Phosphoserine; by PKA and PKC; alternate. An O-linked (GlcNAc) serine; alternate glycan is attached at Ser7. Ser8 is subject to Phosphoserine. Phosphoserine; by PKC occurs at positions 9 and 10. A Phosphothreonine modification is found at Thr20. A Phosphoserine; by PKA and PKC modification is found at Ser25. Residue Ser26 is modified to Phosphoserine; by PKC. Thr33 carries O-linked (GlcNAc) threonine glycosylation. Ser34 is a glycosylation site (O-linked (GlcNAc) serine; alternate). Phosphoserine; by PKC; alternate is present on Ser34. Ser39 carries the post-translational modification Phosphoserine; by CaMK2, PKA, PKC and ROCK2. Ser42 is modified (phosphoserine; by PKC). A Phosphoserine modification is found at Ser49. Tyr53 bears the Phosphotyrosine mark. At Ser55 the chain carries Phosphoserine. At Ser56 the chain carries Phosphoserine; by CDK5 and CDK1. Tyr61 carries the phosphotyrosine modification. Ser66 is subject to Phosphoserine; by PKA and PKC. The residue at position 72 (Ser72) is a Phosphoserine; by AURKB and ROCK2. Ser83 carries the phosphoserine; by CaMK2 modification. A Phosphoserine modification is found at Ser87. The interval 96–131 is coil 1A; the sequence is FKNTRTNEKVELQELNDRFANYIDKVRFLEQQNKIL. Residues 96 to 131 are a coiled coil; it reads FKNTRTNEKVELQELNDRFANYIDKVRFLEQQNKIL. The IF rod domain maps to 103–411; that stretch reads EKVELQELND…KLLEGEESRI (309 aa). A Glycyl lysine isopeptide (Lys-Gly) (interchain with G-Cter in SUMO2) cross-link involves residue Lys104. Phosphotyrosine is present on Tyr117. Lys120, Lys129, and Lys139 each carry N6-acetyllysine; alternate. An N6-succinyllysine; alternate mark is found at Lys120 and Lys129. Glycyl lysine isopeptide (Lys-Gly) (interchain with G-Cter in SUMO2); alternate cross-links involve residues Lys120, Lys129, and Lys139. A linker 1 region spans residues 132–153; sequence LAELEQLKGQGKSRLGDLYEEE. Position 144 is a phosphoserine (Ser144). A coiled-coil region spans residues 154 to 245; sequence MRELRRQVDQ…KLHDEEIQEL (92 aa). A coil 1B region spans residues 154–245; sequence MRELRRQVDQ…KLHDEEIQEL (92 aa). Lys168 bears the N6-acetyllysine mark. Lys188 bears the N6-acetyllysine; alternate mark. N6-succinyllysine; alternate is present on Lys188. Ser214 is subject to Phosphoserine. Lys223 carries the N6-acetyllysine; alternate modification. Lys223 participates in a covalent cross-link: Glycyl lysine isopeptide (Lys-Gly) (interchain with G-Cter in SUMO2); alternate. Ser226 is modified (phosphoserine). The residue at position 235 (Lys235) is an N6-acetyllysine. The tract at residues 246 to 268 is linker 12; sequence QAQIQEQHVQIDMDVSKPDLTAA. Lys262 participates in a covalent cross-link: Glycyl lysine isopeptide (Lys-Gly) (interchain with G-Cter in SUMO2). Positions 269–407 are coil 2; that stretch reads LRDVRQQYES…ATYRKLLEGE (139 aa). Lys294 is subject to N6-acetyllysine; alternate. Residue Lys294 is modified to N6-succinyllysine; alternate. Lys294 participates in a covalent cross-link: Glycyl lysine isopeptide (Lys-Gly) (interchain with G-Cter in SUMO2); alternate. A Phosphoserine modification is found at Ser299. A coiled-coil region spans residues 303 to 407; the sequence is NRNNDALRQA…ATYRKLLEGE (105 aa). Lys313 is covalently cross-linked (Glycyl lysine isopeptide (Lys-Gly) (interchain with G-Cter in SUMO2)). Residues 326–329 carry the [IL]-x-C-x-x-[DE] motif motif; the sequence is LTCE. The residue at position 373 (Lys373) is an N6-acetyllysine; alternate. A Glycyl lysine isopeptide (Lys-Gly) (interchain with G-Cter in SUMO2); alternate cross-link involves residue Lys373. The tract at residues 408–466 is tail; that stretch reads ESRISLPLPNFSSLNLRETNLDSLPLVDTHSKRTLLIKTVETRDGQVINETSQHHDDLE. Phosphoserine is present on residues Ser409, Ser412, Ser419, and Ser420. At Thr426 the chain carries Phosphothreonine. Ser430 carries the post-translational modification Phosphoserine. Thr436 bears the Phosphothreonine mark. The residue at position 438 (Ser438) is a Phosphoserine. Lys439 is covalently cross-linked (Glycyl lysine isopeptide (Lys-Gly) (interchain with G-Cter in SUMO2)). Lys445 carries the N6-acetyllysine; alternate modification. The residue at position 445 (Lys445) is an N6-succinyllysine; alternate. Lys445 participates in a covalent cross-link: Glycyl lysine isopeptide (Lys-Gly) (interchain with G-Cter in SUMO2); alternate. Lys445 is covalently cross-linked (Glycyl lysine isopeptide (Lys-Gly) (interchain with G-Cter in SUMO1); alternate). Residues Thr446 and Thr458 each carry the phosphothreonine modification. Ser459 is subject to Phosphoserine.

It belongs to the intermediate filament family. Homomer assembled from elementary dimers. Identified in complexes that contain VIM, EZR, AHNAK, BFSP1, BFSP2, ANK2, PLEC, PRX and spectrin. Interacts with BCAS3. Interacts with LGSN. Interacts with SYNM. Interacts (via rod region) with PLEC (via CH 1 domain). Interacts with STK33. Interacts with LARP6. Interacts with RAB8B. Interacts with TOR1A; the interaction associates TOR1A with the cytoskeleton. Interacts with TOR1AIP1. Interacts with TOR1AIP1. Interacts with DIAPH1. Interacts with EPPK1; interaction is dependent of higher-order structure of intermediate filament. Interacts with the non-receptor tyrosine kinase SRMS; the interaction leads to phosphorylation of VIM. Interacts with NOD2. Interacts (via head region) with CORO1C. Interacts with HDGF. Interacts with PRKCE (via phorbol-ester/DAG-type 2 domain). Interacts with BFSP2. Interacts with PPL. Interacts with PKP1 and PKP2. Interacts with SCRIB (via PDZ domains); the interaction protects SCRIB from proteasomal degradation and facilitates SCRIB localization to intermediate filaments, the interaction is reduced by cell contact inhibition. One of the most prominent phosphoproteins in various cells of mesenchymal origin. Phosphorylation is enhanced during cell division, at which time vimentin filaments are significantly reorganized. Phosphorylation by PKN1 inhibits the formation of filaments. Filament disassembly during mitosis is promoted by phosphorylation at Ser-55 as well as by nestin. Phosphorylated at Ser-56 by CDK5 during neutrophil secretion in the cytoplasm. Phosphorylated by STK33. Phosphorylated on tyrosine residues by SRMS. In terms of processing, S-nitrosylation is induced by interferon-gamma and oxidatively-modified low-densitity lipoprotein (LDL(ox)) possibly implicating the iNOS-S100A8/9 transnitrosylase complex.

It is found in the cytoplasm. The protein localises to the cytoskeleton. It localises to the nucleus matrix. Its subcellular location is the cell membrane. Vimentins are class-III intermediate filaments found in various non-epithelial cells, especially mesenchymal cells. Vimentin is attached to the nucleus, endoplasmic reticulum, and mitochondria, either laterally or terminally. Plays a role in cell directional movement, orientation, cell sheet organization and Golgi complex polarization at the cell migration front. Protects SCRIB from proteasomal degradation and facilitates its localization to intermediate filaments in a cell contact-mediated manner. Functionally, involved with LARP6 in the stabilization of type I collagen mRNAs for CO1A1 and CO1A2. The polypeptide is Vimentin (VIM) (Bos taurus (Bovine)).